Here is a 56-residue protein sequence, read N- to C-terminus: Large ribosomal subunit protein bL33 (56 aa).

The protein belongs to the bacterial ribosomal protein bL33 family.

The chain is Large ribosomal subunit protein bL33 from Anaplasma phagocytophilum (strain HZ).